Here is a 128-residue protein sequence, read N- to C-terminus: UPF0102 protein KPN78578_35270 (128 aa).

Residues 1–20 are disordered; the sequence is MAQVPAGKNRSGQLSKQTGD.

This sequence belongs to the UPF0102 family.

This is UPF0102 protein KPN78578_35270 from Klebsiella pneumoniae subsp. pneumoniae (strain ATCC 700721 / MGH 78578).